Reading from the N-terminus, the 25-residue chain is Gastrin-releasing peptide (25 aa).

Position 25 is a methionine amide (Met25).

The protein belongs to the bombesin/neuromedin-B/ranatensin family.

It localises to the secreted. The protein localises to the cytoplasmic vesicle. Its subcellular location is the secretory vesicle lumen. Its function is as follows. Stimulates the release of gastrin and other gastrointestinal hormones. In Scyliorhinus canicula (Small-spotted catshark), this protein is Gastrin-releasing peptide (grp).